A 181-amino-acid chain; its full sequence is CASP-like protein UU-1 (181 aa).

The Cytoplasmic portion of the chain corresponds to M1–R30. A helical transmembrane segment spans residues T31 to A51. Over T52–K65 the chain is Extracellular. The chain crosses the membrane as a helical span at residues M66–L86. Topologically, residues T87–T107 are cytoplasmic. The helical transmembrane segment at V108–G128 threads the bilayer. Residues N129–R147 are Extracellular-facing. A helical transmembrane segment spans residues G148 to L168. Residues S169–R181 are Cytoplasmic-facing.

Belongs to the Casparian strip membrane proteins (CASP) family. Homodimer and heterodimers.

The protein localises to the cell membrane. This is CASP-like protein UU-1 from Sorghum bicolor (Sorghum).